Consider the following 120-residue polypeptide: Methylglyoxal synthase (120 aa).

Residues 1–120 (MRIALIAHDN…TAEILVESVL (120 aa)) enclose the MGS-like domain. Residues histidine 8, lysine 12, and 54-55 (SG) contribute to the substrate site. Aspartate 60 (proton donor/acceptor) is an active-site residue. Substrate is bound at residue histidine 87.

The protein belongs to the methylglyoxal synthase family.

It catalyses the reaction dihydroxyacetone phosphate = methylglyoxal + phosphate. In terms of biological role, catalyzes the formation of methylglyoxal from dihydroxyacetone phosphate. The protein is Methylglyoxal synthase of Natranaerobius thermophilus (strain ATCC BAA-1301 / DSM 18059 / JW/NM-WN-LF).